Here is a 470-residue protein sequence, read N- to C-terminus: MELNTKKKLHALSLAEKIQVLELLDESKMSQSEVARRFQVSQPQISRICKNKEKLLADWCSGTANHERKRKRESKYSGIDEALLCWYHIARAKAWDVTGPMLLHKAKELADIMGQDFVPSIGWLVRWKRRNNVGFGTRQVLVPLFPPEAPPAVLPSQAQPPLSLKDFSPEDVFGCAEVPLLYRAVPGRVFECDRLQVLLCANSRGTEKRRVFVGGLQAAPRCFFGVSSEALPTSYHPDLAIPWSEWLAQFDQDMGQQGRQVALLLASGVVEEWASLPGLHHVRLLPLSASSTTPSLPGSVILAFKAHYRHRLLSKLAAMQSGKEGTSLAEARASITVLDALHMVAAAWAKVPRQLILSSFVQEGLAPGKTPLSLDKDTEMSPVPSGLSQEEFSHFVDLEDEDPGPRVCKEETGTEDSGREEDGFEPLPTKADALQALCTLRRWLECNSASPELFEKFYDCEVEVEQLCCL.

The region spanning 3 to 55 (LNTKKKLHALSLAEKIQVLELLDESKMSQSEVARRFQVSQPQISRICKNKEKL) is the HTH psq-type domain. DNA-binding regions (H-T-H motif) lie at residues 31-51 (QSEV…ICKN) and 100-130 (PMLL…WKRR). An HTH CENPB-type domain is found at 67 to 137 (ERKRKRESKY…KRRNNVGFGT (71 aa)). Residues 167–360 (FSPEDVFGCA…VPRQLILSSF (194 aa)) enclose the DDE-1 domain. Basic and acidic residues predominate over residues 402 to 421 (DPGPRVCKEETGTEDSGREE). The interval 402 to 426 (DPGPRVCKEETGTEDSGREEDGFEP) is disordered.

The protein belongs to the tigger transposable element derived protein family.

Its subcellular location is the nucleus. This is Tigger transposable element-derived protein 3 (Tigd3) from Mus musculus (Mouse).